The following is a 597-amino-acid chain: uncharacterized protein (597 aa).

Positions 1-23 (MSHEGSRQARDRGVTRSKAEKAR) are enriched in basic and acidic residues. 2 disordered regions span residues 1 to 32 (MSHE…VPQV) and 171 to 192 (RESQ…NPRP). Positions 175 to 186 (EPTQSSEPSAEP) are enriched in low complexity. Ser237 and Ser241 each carry phosphoserine. 2 disordered regions span residues 302–335 (SLLS…MRLD) and 549–569 (EAEE…GVSK). Over residues 557 to 568 (APEQQPIQTGVS) the composition is skewed to polar residues.

This is an uncharacterized protein from Rattus norvegicus (Rat).